The chain runs to 1960 residues: Exophilin-5 (1960 aa).

A RabBD domain is found at 7–63 (GFDFSFLNEEEARKILQVLERNEELRRAEKDRISKLQKTKRDIRWLQGATGEWFEEI). Polar residues-rich tracts occupy residues 325–334 (ASPATGSFTA), 342–366 (DTQN…LSSI), and 635–645 (SQSSSFPDSTA). 5 disordered regions span residues 325 to 366 (ASPA…LSSI), 616 to 645 (TPAS…DSTA), 672 to 720 (HSTD…TGLP), 734 to 835 (DFQN…SSNT), and 910 to 976 (FSRS…KGRV). Over residues 673-682 (STDSLSLTDT) the composition is skewed to low complexity. Positions 692 to 707 (NSEKDMDVSVSKDEQL) are enriched in basic and acidic residues. Phosphoserine occurs at positions 799 and 802. Polar residues-rich tracts occupy residues 808-835 (ESGT…SSNT) and 910-920 (FSRSLSDQDPG). Positions 921 to 932 (QEQREEKDKATK) are enriched in basic and acidic residues. Polar residues predominate over residues 933–945 (SQDNQLAVNSTDN). Serine 1027 carries the phosphoserine modification. Residues 1035–1095 (QESKGTVASV…PKATKKMTDM (61 aa)) are disordered. Residues 1062-1074 (GKSTSDKPSSPES) show a composition bias toward polar residues. A phosphoserine mark is found at serine 1083 and serine 1117. Disordered stretches follow at residues 1291-1375 (AQVQ…LSRE), 1389-1493 (PLLH…DSES), and 1510-1759 (EAQP…EPHL). The span at 1318-1336 (PESKDVSQLPDRETSKSTL) shows a compositional bias: basic and acidic residues. The segment covering 1356–1365 (KEISPSNVSK) has biased composition (polar residues). The segment covering 1392–1403 (HQEKGAGKEHTK) has biased composition (basic and acidic residues). Composition is skewed to polar residues over residues 1470 to 1493 (RETS…DSES) and 1520 to 1533 (SEAS…TNTA). Position 1493 is a phosphoserine (serine 1493). Composition is skewed to basic and acidic residues over residues 1534-1546 (EMRK…HMLT) and 1561-1571 (TNTDETKDRYS). Positions 1572-1586 (GKHRLAAISKASKRI) are enriched in basic residues. A compositionally biased stretch (polar residues) spans 1637–1657 (ESSQMNVDKSETLLQETTVSS). 4 positions are modified to phosphoserine: serine 1724, serine 1739, serine 1789, and serine 1819. Positions 1732–1741 (TQKSTINSHC) are enriched in polar residues. Disordered regions lie at residues 1828–1847 (ESES…STSS) and 1906–1960 (VNSP…ESEL). Acidic residues predominate over residues 1939-1950 (WDTDTTTDDEYY). Basic and acidic residues predominate over residues 1951–1960 (LDEKDKESEL).

As to quaternary structure, interacts with RAB27A.

Functionally, may act as Rab effector protein and play a role in vesicle trafficking. The sequence is that of Exophilin-5 from Mus musculus (Mouse).